Here is a 272-residue protein sequence, read N- to C-terminus: Undecaprenyl-diphosphatase (272 aa).

The next 8 membrane-spanning stretches (helical) occupy residues 1-21 (MSTL…FLPI), 39-59 (QGLA…MMYF), 91-111 (WWIL…KDFI), 117-137 (SALV…FADI), 151-171 (LGLK…IPGT), 196-216 (FLLS…KLIL), 228-248 (LGSL…LILL), and 251-271 (LGMM…LWFI).

Belongs to the UppP family.

It is found in the cell inner membrane. It carries out the reaction di-trans,octa-cis-undecaprenyl diphosphate + H2O = di-trans,octa-cis-undecaprenyl phosphate + phosphate + H(+). Catalyzes the dephosphorylation of undecaprenyl diphosphate (UPP). Confers resistance to bacitracin. This is Undecaprenyl-diphosphatase from Colwellia psychrerythraea (strain 34H / ATCC BAA-681) (Vibrio psychroerythus).